Here is a 723-residue protein sequence, read N- to C-terminus: Nuclear hormone receptor HR96 (723 aa).

The nuclear receptor DNA-binding region spans 4-79 (PKNCAVCGDK…IGMKSENIMS (76 aa)). NR C4-type zinc fingers lie at residues 7–27 (CAVCGDKALGYNFNAVTCESC) and 43–67 (CPFNQNCDITVVTRRFCQKCRLRKC). The segment at 95–163 (AKRRLMENGT…QASSPGTQVN (69 aa)) is disordered. 2 stretches are compositionally biased toward polar residues: residues 122–142 (DSSSSNLDHYSGSQDSQSCGS) and 151–163 (SGRQASSPGTQVN). Residues 483–723 (EQMKLRELRL…LREIFDLKNH (241 aa)) enclose the NR LBD domain.

The protein belongs to the nuclear hormone receptor family. NR1 subfamily.

The protein localises to the nucleus. Its function is as follows. Binds selectively to the HSP27 20E response element. This Drosophila melanogaster (Fruit fly) protein is Nuclear hormone receptor HR96 (Hr96).